A 401-amino-acid polypeptide reads, in one-letter code: L-rhamnonate dehydratase (401 aa).

Substrate-binding residues include histidine 29 and arginine 55. Positions 222, 248, and 276 each coordinate Mg(2+). The active-site Proton acceptor is histidine 325. Glutamate 345 is a substrate binding site.

This sequence belongs to the mandelate racemase/muconate lactonizing enzyme family. RhamD subfamily. Homooctamer; tetramer of dimers. Mg(2+) is required as a cofactor.

It carries out the reaction L-rhamnonate = 2-dehydro-3-deoxy-L-rhamnonate + H2O. In terms of biological role, catalyzes the dehydration of L-rhamnonate to 2-keto-3-deoxy-L-rhamnonate (KDR). This chain is L-rhamnonate dehydratase, found in Klebsiella pneumoniae subsp. pneumoniae (strain ATCC 700721 / MGH 78578).